Consider the following 358-residue polypeptide: Isopentenyl-diphosphate delta-isomerase (358 aa).

Residue 12 to 13 (RK) participates in substrate binding. FMN is bound by residues 69–71 (AMT), Ser-99, and Asn-128. Residue Gln-158 participates in substrate binding. Glu-159 contacts Mg(2+). FMN contacts are provided by residues Lys-190, Thr-220, 267-269 (GIR), and 288-289 (AG).

This sequence belongs to the IPP isomerase type 2 family. Homooctamer. Dimer of tetramers. FMN is required as a cofactor. It depends on NADPH as a cofactor. Mg(2+) serves as cofactor.

The protein localises to the cytoplasm. The catalysed reaction is isopentenyl diphosphate = dimethylallyl diphosphate. In terms of biological role, involved in the biosynthesis of isoprenoids. Catalyzes the 1,3-allylic rearrangement of the homoallylic substrate isopentenyl (IPP) to its allylic isomer, dimethylallyl diphosphate (DMAPP). The polypeptide is Isopentenyl-diphosphate delta-isomerase (Listeria monocytogenes serovar 1/2a (strain ATCC BAA-679 / EGD-e)).